Consider the following 121-residue polypeptide: ATP synthase epsilon chain (121 aa).

Belongs to the ATPase epsilon chain family. As to quaternary structure, F-type ATPases have 2 components, CF(1) - the catalytic core - and CF(0) - the membrane proton channel. CF(1) has five subunits: alpha(3), beta(3), gamma(1), delta(1), epsilon(1). CF(0) has three main subunits: a, b and c.

The protein resides in the cell membrane. Produces ATP from ADP in the presence of a proton gradient across the membrane. The chain is ATP synthase epsilon chain from Mycobacterium leprae (strain Br4923).